Reading from the N-terminus, the 481-residue chain is Matrix metalloproteinase-20 (481 aa).

A signal peptide spans 1 to 20 (MLPASGLAVLLVTALKFSTA). A propeptide spanning residues 21-105 (APSLPAASPR…PRCGVPDVAN (85 aa)) is cleaved from the precursor. N-linked (GlcNAc...) asparagine glycosylation occurs at N64. Positions 96–103 (PRCGVPDV) match the Cysteine switch motif. Position 98 (C98) interacts with Zn(2+). Ca(2+)-binding residues include E162, A163, and D164. Residues H174 and D176 each coordinate Zn(2+). 4 residues coordinate Ca(2+): D181, G182, R184, and T186. H189 is a Zn(2+) binding site. The Ca(2+) site is built by E195, G196, G198, and D200. H202 contacts Zn(2+). Positions 204 and 207 each coordinate Ca(2+). Zn(2+) is bound at residue H224. The active site involves E225. Zn(2+) is bound by residues H228 and H234. Hemopexin repeat units follow at residues 291–341 (PDLC…FPQL), 342–387 (MSNV…GFPR), 389–437 (VQRI…FSGV), and 438–481 (NGQI…WIGC). A disulfide bridge connects residues C294 and C481. N297 carries an N-linked (GlcNAc...) asparagine glycan.

Belongs to the peptidase M10A family. The cofactor is Zn(2+). Requires Ca(2+) as cofactor. Post-translationally, autoactivates at least at the 105-Asn-|-Tyr-106 site. Expressed in the enamel organ.

The protein localises to the secreted. It is found in the extracellular space. It localises to the extracellular matrix. Its function is as follows. Degrades amelogenin, the major protein component of the enamel matrix and two of the macromolecules characterizing the cartilage extracellular matrix: aggrecan and the cartilage oligomeric matrix protein (COMP). May play a central role in tooth enamel formation. Cleaves aggrecan at the '360-Ser-|-Phe-361' site. The sequence is that of Matrix metalloproteinase-20 (MMP20) from Bos taurus (Bovine).